The following is a 40-amino-acid chain: Snaclec tokaracetin subunit beta (40 aa).

The cysteines at positions 2 and 13 are disulfide-linked. The region spanning 9 to 40 is the C-type lectin domain; that stretch reads YDEHCYRVFQQKMNWEDAEKFCTQQHKGXHLX.

The protein belongs to the snaclec family. As to quaternary structure, heterodimer of subunits alpha and beta; disulfide-linked. In terms of tissue distribution, expressed by the venom gland.

It is found in the secreted. Functionally, platelet antagonist that specifically and reversibly binds to a site on platelet glycoprotein Ibalpha (GP1BA) close to or identical with the site for vWF binding. It inhibits the binding of vWF to platelets and vWF-dependent shear-induced platelet aggregation. The sequence is that of Snaclec tokaracetin subunit beta from Protobothrops tokarensis (Tokara habu).